The primary structure comprises 490 residues: GTPase Der (490 aa).

EngA-type G domains are found at residues 3 to 167 (FTLA…DAFE) and 203 to 378 (LQVA…EVWN). GTP is bound by residues 9–16 (GRPNVGKS), 56–60 (DTAGL), 119–122 (NKAE), 209–216 (GRPNAGKS), 256–260 (DTAGM), and 321–324 (NKWD). Residues 379 to 465 (RRVPTAALNR…RLTMRSQSDA (87 aa)) form the KH-like domain. Residues 451–490 (PGTPIRLTMRSQSDANPYKNRKKSTPSRLRKHLGKPSLKG) are disordered. Positions 469-484 (KNRKKSTPSRLRKHLG) are enriched in basic residues.

Belongs to the TRAFAC class TrmE-Era-EngA-EngB-Septin-like GTPase superfamily. EngA (Der) GTPase family. In terms of assembly, associates with the 50S ribosomal subunit.

Its function is as follows. GTPase that plays an essential role in the late steps of ribosome biogenesis. The protein is GTPase Der of Dinoroseobacter shibae (strain DSM 16493 / NCIMB 14021 / DFL 12).